The following is a 139-amino-acid chain: Nucleoside diphosphate kinase (139 aa).

The ATP site is built by Lys10, Phe58, Arg86, Thr92, Arg103, and Asn113. The active-site Pros-phosphohistidine intermediate is the His116.

This sequence belongs to the NDK family. Homotetramer. The cofactor is Mg(2+).

Its subcellular location is the cytoplasm. It catalyses the reaction a 2'-deoxyribonucleoside 5'-diphosphate + ATP = a 2'-deoxyribonucleoside 5'-triphosphate + ADP. The catalysed reaction is a ribonucleoside 5'-diphosphate + ATP = a ribonucleoside 5'-triphosphate + ADP. Major role in the synthesis of nucleoside triphosphates other than ATP. The ATP gamma phosphate is transferred to the NDP beta phosphate via a ping-pong mechanism, using a phosphorylated active-site intermediate. The polypeptide is Nucleoside diphosphate kinase (Phenylobacterium zucineum (strain HLK1)).